Here is a 175-residue protein sequence, read N- to C-terminus: ATP synthase subunit b, chloroplastic (175 aa).

Residues V26–V44 traverse the membrane as a helical segment.

Belongs to the ATPase B chain family. F-type ATPases have 2 components, F(1) - the catalytic core - and F(0) - the membrane proton channel. F(1) has five subunits: alpha(3), beta(3), gamma(1), delta(1), epsilon(1). F(0) has four main subunits: a(1), b(1), b'(1) and c(10-14). The alpha and beta chains form an alternating ring which encloses part of the gamma chain. F(1) is attached to F(0) by a central stalk formed by the gamma and epsilon chains, while a peripheral stalk is formed by the delta, b and b' chains.

The protein localises to the plastid. The protein resides in the chloroplast thylakoid membrane. Its function is as follows. F(1)F(0) ATP synthase produces ATP from ADP in the presence of a proton or sodium gradient. F-type ATPases consist of two structural domains, F(1) containing the extramembraneous catalytic core and F(0) containing the membrane proton channel, linked together by a central stalk and a peripheral stalk. During catalysis, ATP synthesis in the catalytic domain of F(1) is coupled via a rotary mechanism of the central stalk subunits to proton translocation. In terms of biological role, component of the F(0) channel, it forms part of the peripheral stalk, linking F(1) to F(0). This is ATP synthase subunit b, chloroplastic from Tupiella akineta (Green alga).